The following is a 198-amino-acid chain: 7-methyl-GTP pyrophosphatase (198 aa).

Asp-75 acts as the Proton acceptor in catalysis.

It belongs to the Maf family. YceF subfamily. A divalent metal cation is required as a cofactor.

The protein localises to the cytoplasm. The catalysed reaction is N(7)-methyl-GTP + H2O = N(7)-methyl-GMP + diphosphate + H(+). In terms of biological role, nucleoside triphosphate pyrophosphatase that hydrolyzes 7-methyl-GTP (m(7)GTP). May have a dual role in cell division arrest and in preventing the incorporation of modified nucleotides into cellular nucleic acids. In Nitrosospira multiformis (strain ATCC 25196 / NCIMB 11849 / C 71), this protein is 7-methyl-GTP pyrophosphatase.